The sequence spans 1453 residues: Spike glycoprotein (1453 aa).

The first 31 residues, 1-31 (MIVLTLCLFLVLYNSVICTSNNECVQVNVTQ), serve as a signal peptide directing secretion. Residues 32-780 (LPGNENIIRD…WTTTPNFYYY (749 aa)) form an S1 region. Over 32–1394 (LPGNENIIRD…NRIETYVKWP (1363 aa)) the chain is Virion surface. Residues 661 to 805 (VIYEEGDNIV…DSNDVDCEPI (145 aa)) are interaction with host ANPEP. Residues 781 to 1453 (SIYNYTNERV…YEPIEKVHVH (673 aa)) form an S2 region. The interval 1026–1047 (AGGITLGALGGGAVSIPFAVAV) is fusion peptide. The segment at 1041-1160 (IPFAVAVQAR…QVDRLITGRL (120 aa)) is heptad repeat 1 (HR1). 2 coiled-coil regions span residues 1108 to 1152 (QDVV…DAQV) and 1342 to 1384 (TYLN…LEWL). The interval 1309–1406 (PDYIDINQTV…VWLLIGLVVI (98 aa)) is heptad repeat 2 (HR2). The helical transmembrane segment at 1395 to 1414 (WYVWLLIGLVVIFCIPLLLF) threads the bilayer. Topologically, residues 1415–1453 (CCCSTGCCGCFGCIGSCCHSMCSRRQFESYEPIEKVHVH) are intravirion. The KxHxx signature appears at 1449 to 1453 (KVHVH).

This sequence belongs to the alphacoronaviruses spike protein family. As to quaternary structure, homotrimer. During virus morphogenesis, found in a complex with M and HE proteins. Interacts with host ANPEP.

The protein localises to the virion membrane. The protein resides in the host endoplasmic reticulum-Golgi intermediate compartment membrane. In terms of biological role, S1 region attaches the virion to the cell membrane by interacting with host ANPEP/aminopeptidase N, initiating the infection. Binding to the receptor probably induces conformational changes in the S glycoprotein unmasking the fusion peptide of S2 region and activating membranes fusion. S2 region belongs to the class I viral fusion protein. Under the current model, the protein has at least 3 conformational states: pre-fusion native state, pre-hairpin intermediate state, and post-fusion hairpin state. During viral and target cell membrane fusion, the coiled coil regions (heptad repeats) regions assume a trimer-of-hairpins structure, positioning the fusion peptide in close proximity to the C-terminal region of the ectodomain. The formation of this structure appears to drive apposition and subsequent fusion of viral and target cell membranes. The protein is Spike glycoprotein of Canis lupus familiaris (Dog).